We begin with the raw amino-acid sequence, 709 residues long: Elongation factor G (709 aa).

Positions A8–L297 constitute a tr-type G domain. Residues A17 to T24, D81 to H85, and N135 to D138 each bind GTP.

It belongs to the TRAFAC class translation factor GTPase superfamily. Classic translation factor GTPase family. EF-G/EF-2 subfamily.

It is found in the cytoplasm. Functionally, catalyzes the GTP-dependent ribosomal translocation step during translation elongation. During this step, the ribosome changes from the pre-translocational (PRE) to the post-translocational (POST) state as the newly formed A-site-bound peptidyl-tRNA and P-site-bound deacylated tRNA move to the P and E sites, respectively. Catalyzes the coordinated movement of the two tRNA molecules, the mRNA and conformational changes in the ribosome. This chain is Elongation factor G, found in Lactococcus lactis subsp. lactis (strain IL1403) (Streptococcus lactis).